The chain runs to 885 residues: Alanine--tRNA ligase (885 aa).

Zn(2+) contacts are provided by His-563, His-567, Cys-677, and His-681. Positions 848–868 are disordered; it reads LGGKGGGGRPDRAQGGAPSLA.

The protein belongs to the class-II aminoacyl-tRNA synthetase family. The cofactor is Zn(2+).

It is found in the cytoplasm. The enzyme catalyses tRNA(Ala) + L-alanine + ATP = L-alanyl-tRNA(Ala) + AMP + diphosphate. Functionally, catalyzes the attachment of alanine to tRNA(Ala) in a two-step reaction: alanine is first activated by ATP to form Ala-AMP and then transferred to the acceptor end of tRNA(Ala). Also edits incorrectly charged Ser-tRNA(Ala) and Gly-tRNA(Ala) via its editing domain. This is Alanine--tRNA ligase from Paracoccus denitrificans (strain Pd 1222).